The following is a 353-amino-acid chain: Paraxanthine methyltransferase 2 (353 aa).

Tyrosine 18 serves as a coordination point for S-adenosyl-L-methionine. Residues tyrosine 18 and 21 to 25 contribute to the substrate site; that span reads QSSYQ. S-adenosyl-L-methionine-binding positions include glycine 59, 59-60, asparagine 65, 99-102, 128-130, and 145-147; these read GC, FNDL, SFF, and SYA. 146–150 contacts substrate; the sequence is YAFLF. 3 residues coordinate Mg(2+): asparagine 167, aspartate 252, and phenylalanine 254. Substrate-binding residues include serine 301 and tyrosine 306.

Belongs to the methyltransferase superfamily. SABATH family. Homodimer. The cofactor is Mg(2+).

This is Paraxanthine methyltransferase 2 from Arabidopsis thaliana (Mouse-ear cress).